We begin with the raw amino-acid sequence, 395 residues long: Nicotinate phosphoribosyltransferase (395 aa).

H222 bears the Phosphohistidine; by autocatalysis mark.

It belongs to the NAPRTase family. In terms of processing, transiently phosphorylated on a His residue during the reaction cycle. Phosphorylation strongly increases the affinity for substrates and increases the rate of nicotinate D-ribonucleotide production. Dephosphorylation regenerates the low-affinity form of the enzyme, leading to product release.

It carries out the reaction nicotinate + 5-phospho-alpha-D-ribose 1-diphosphate + ATP + H2O = nicotinate beta-D-ribonucleotide + ADP + phosphate + diphosphate. Its pathway is cofactor biosynthesis; NAD(+) biosynthesis; nicotinate D-ribonucleotide from nicotinate: step 1/1. In terms of biological role, catalyzes the synthesis of beta-nicotinate D-ribonucleotide from nicotinate and 5-phospho-D-ribose 1-phosphate at the expense of ATP. The chain is Nicotinate phosphoribosyltransferase from Polaromonas sp. (strain JS666 / ATCC BAA-500).